The primary structure comprises 121 residues: Large ribosomal subunit protein bL12 (121 aa).

The protein belongs to the bacterial ribosomal protein bL12 family. In terms of assembly, homodimer. Part of the ribosomal stalk of the 50S ribosomal subunit. Forms a multimeric L10(L12)X complex, where L10 forms an elongated spine to which 2 to 4 L12 dimers bind in a sequential fashion. Binds GTP-bound translation factors.

Functionally, forms part of the ribosomal stalk which helps the ribosome interact with GTP-bound translation factors. Is thus essential for accurate translation. This is Large ribosomal subunit protein bL12 from Anoxybacillus flavithermus (strain DSM 21510 / WK1).